Consider the following 472-residue polypeptide: NADH-quinone oxidoreductase subunit N (472 aa).

Helical transmembrane passes span 5–25 (LLTT…IGLL), 36–56 (AYAA…QYGI), 77–97 (IFLV…DGLP), 103–123 (FYAL…ANDL), 126–146 (LYVG…YILG), 158–178 (LLLG…LYGL), 197–217 (LAIA…AVPF), 229–249 (PTPV…AVLV), 264–284 (WLTV…VVAI), 292–309 (MLAY…VGLM), 319–339 (ILFY…VATA), 363–383 (ASVM…AGFV), 396–416 (GVLW…YYYL), and 441–461 (LTVI…GPLA).

Belongs to the complex I subunit 2 family. NDH-1 is composed of 14 different subunits. Subunits NuoA, H, J, K, L, M, N constitute the membrane sector of the complex.

It localises to the cell membrane. It carries out the reaction a quinone + NADH + 5 H(+)(in) = a quinol + NAD(+) + 4 H(+)(out). Functionally, NDH-1 shuttles electrons from NADH, via FMN and iron-sulfur (Fe-S) centers, to quinones in the respiratory chain. The immediate electron acceptor for the enzyme in this species is believed to be a menaquinone. Couples the redox reaction to proton translocation (for every two electrons transferred, four hydrogen ions are translocated across the cytoplasmic membrane), and thus conserves the redox energy in a proton gradient. This is NADH-quinone oxidoreductase subunit N from Heliobacterium modesticaldum (strain ATCC 51547 / Ice1).